The primary structure comprises 170 residues: Nicotinamide-nucleotide adenylyltransferase (170 aa).

The protein belongs to the archaeal NMN adenylyltransferase family.

It localises to the cytoplasm. It carries out the reaction beta-nicotinamide D-ribonucleotide + ATP + H(+) = diphosphate + NAD(+). It functions in the pathway cofactor biosynthesis; NAD(+) biosynthesis; NAD(+) from nicotinamide D-ribonucleotide: step 1/1. The protein is Nicotinamide-nucleotide adenylyltransferase of Methanothrix thermoacetophila (strain DSM 6194 / JCM 14653 / NBRC 101360 / PT) (Methanosaeta thermophila).